A 321-amino-acid polypeptide reads, in one-letter code: Queuosine 5'-phosphate N-glycosylase/hydrolase (321 aa).

Positions 227, 229, and 296 each coordinate queuine. Asp229 (nucleophile or transition state stabilizer) is an active-site residue.

The protein belongs to the QNG1 protein family.

The enzyme catalyses queuosine 5'-phosphate + H2O = queuine + D-ribose 5-phosphate. In terms of biological role, catalyzes the hydrolysis of queuosine 5'-phosphate, releasing the nucleobase queuine (q). Is required for salvage of queuine from exogenous queuosine (Q) that is imported and then converted to queuosine 5'-phosphate intracellularly. The protein is Queuosine 5'-phosphate N-glycosylase/hydrolase of Dictyostelium discoideum (Social amoeba).